The primary structure comprises 298 residues: tRNA uridine(34) hydroxylase (298 aa).

The Rhodanese domain maps to 123–217 (QNPDVTLVDT…YLEEIPVAES (95 aa)). The active-site Cysteine persulfide intermediate is C177.

This sequence belongs to the TrhO family.

The catalysed reaction is uridine(34) in tRNA + AH2 + O2 = 5-hydroxyuridine(34) in tRNA + A + H2O. In terms of biological role, catalyzes oxygen-dependent 5-hydroxyuridine (ho5U) modification at position 34 in tRNAs. The protein is tRNA uridine(34) hydroxylase of Picosynechococcus sp. (strain ATCC 27264 / PCC 7002 / PR-6) (Agmenellum quadruplicatum).